Consider the following 40-residue polypeptide: Photosystem II reaction center protein L (40 aa).

Residues 19 to 39 form a helical membrane-spanning segment; sequence SLFLGLLLVFVLGILFSSYFF.

The protein belongs to the PsbL family. As to quaternary structure, PSII is composed of 1 copy each of membrane proteins PsbA, PsbB, PsbC, PsbD, PsbE, PsbF, PsbH, PsbI, PsbJ, PsbK, PsbL, PsbM, PsbT, PsbX, PsbY, PsbZ, Psb30/Ycf12, peripheral proteins PsbO, CyanoQ (PsbQ), PsbU, PsbV and a large number of cofactors. It forms dimeric complexes.

The protein localises to the cellular thylakoid membrane. In terms of biological role, one of the components of the core complex of photosystem II (PSII). PSII is a light-driven water:plastoquinone oxidoreductase that uses light energy to abstract electrons from H(2)O, generating O(2) and a proton gradient subsequently used for ATP formation. It consists of a core antenna complex that captures photons, and an electron transfer chain that converts photonic excitation into a charge separation. This subunit is found at the monomer-monomer interface and is required for correct PSII assembly and/or dimerization. This Synechococcus elongatus (strain ATCC 33912 / PCC 7942 / FACHB-805) (Anacystis nidulans R2) protein is Photosystem II reaction center protein L.